The chain runs to 265 residues: Cytochrome c oxidase subunit 3 (265 aa).

6 consecutive transmembrane segments (helical) span residues 41–61 (GGAT…FVWW), 85–105 (GFIL…WAFF), 137–157 (TLIL…ILAG), 162–182 (AVYA…FQGM), 200–220 (FFLA…FLIV), and 245–265 (WHFV…WGGI).

It belongs to the cytochrome c oxidase subunit 3 family. In terms of assembly, component of the cytochrome c oxidase (complex IV, CIV), a multisubunit enzyme composed of a catalytic core of 3 subunits and several supernumerary subunits. The complex exists as a monomer or a dimer and forms supercomplexes (SCs) in the inner mitochondrial membrane with ubiquinol-cytochrome c oxidoreductase (cytochrome b-c1 complex, complex III, CIII).

The protein resides in the mitochondrion inner membrane. The catalysed reaction is 4 Fe(II)-[cytochrome c] + O2 + 8 H(+)(in) = 4 Fe(III)-[cytochrome c] + 2 H2O + 4 H(+)(out). Its function is as follows. Component of the cytochrome c oxidase, the last enzyme in the mitochondrial electron transport chain which drives oxidative phosphorylation. The respiratory chain contains 3 multisubunit complexes succinate dehydrogenase (complex II, CII), ubiquinol-cytochrome c oxidoreductase (cytochrome b-c1 complex, complex III, CIII) and cytochrome c oxidase (complex IV, CIV), that cooperate to transfer electrons derived from NADH and succinate to molecular oxygen, creating an electrochemical gradient over the inner membrane that drives transmembrane transport and the ATP synthase. Cytochrome c oxidase is the component of the respiratory chain that catalyzes the reduction of oxygen to water. Electrons originating from reduced cytochrome c in the intermembrane space (IMS) are transferred via the dinuclear copper A center (CU(A)) of subunit 2 and heme A of subunit 1 to the active site in subunit 1, a binuclear center (BNC) formed by heme A3 and copper B (CU(B)). The BNC reduces molecular oxygen to 2 water molecules using 4 electrons from cytochrome c in the IMS and 4 protons from the mitochondrial matrix. This is Cytochrome c oxidase subunit 3 (COX3) from Triticum aestivum (Wheat).